A 282-amino-acid chain; its full sequence is tRNA U34 carboxymethyltransferase (282 aa).

Carboxy-S-adenosyl-L-methionine contacts are provided by residues K54, W68, K73, G92, 114-116, Y161, and R276; that span reads DPS.

Belongs to the class I-like SAM-binding methyltransferase superfamily. CmoB family. Homotetramer.

It catalyses the reaction carboxy-S-adenosyl-L-methionine + 5-hydroxyuridine(34) in tRNA = 5-carboxymethoxyuridine(34) in tRNA + S-adenosyl-L-homocysteine + H(+). Functionally, catalyzes carboxymethyl transfer from carboxy-S-adenosyl-L-methionine (Cx-SAM) to 5-hydroxyuridine (ho5U) to form 5-carboxymethoxyuridine (cmo5U) at position 34 in tRNAs. This is tRNA U34 carboxymethyltransferase from Campylobacter fetus subsp. fetus (strain 82-40).